Consider the following 245-residue polypeptide: Dehydrogenase/reductase SDR family member 6 (245 aa).

Residues 16–18 (QGI), Asp37, and Asp58 contribute to the NAD(+) site. Position 144 (Arg144) interacts with substrate. Tyr147 acts as the Proton acceptor in catalysis. NAD(+)-binding positions include Lys151 and 180–184 (VDTPS). 2 residues coordinate substrate: Arg188 and Arg205.

The protein belongs to the short-chain dehydrogenases/reductases (SDR) family. Homotetramer.

It is found in the cytoplasm. It carries out the reaction cis-4-hydroxy-L-proline + NAD(+) = 4-oxo-L-proline + NADH + H(+). It catalyses the reaction (R)-3-hydroxybutanoate + NAD(+) = acetoacetate + NADH + H(+). Its pathway is amino-acid metabolism. It participates in siderophore biosynthesis. NAD(H)-dependent dehydrogenase/reductase with a preference for cyclic substrates. Catalyzes stereoselective conversion of 4-oxo-L-proline to cis-4-hydroxy-L-proline, likely a detoxification mechanism for ketoprolines. Mediates the formation of 2,5-dihydroxybenzoate (2,5-DHBA), a siderophore that chelates free cytoplasmic iron and associates with LCN2, thereby regulating iron transport and homeostasis while protecting cells against free radical-induced oxidative stress. The iron-siderophore complex is imported into mitochondria, providing an iron source for mitochondrial metabolic processes in particular heme synthesis. May act as a 3-hydroxybutyrate dehydrogenase. The sequence is that of Dehydrogenase/reductase SDR family member 6 (BDH2) from Bos taurus (Bovine).